A 413-amino-acid polypeptide reads, in one-letter code: Tubby-like F-box protein 6 (413 aa).

The 56-residue stretch at 67–122 folds into the F-box domain; that stretch reads SIWVDLPPELLLDIIQRIESEQSLWPGRRDVVACASVCKSWREMTKEVVKVPELSG.

The protein belongs to the TUB family. As to expression, ubiquitous, with higher levels in flowers.

In Arabidopsis thaliana (Mouse-ear cress), this protein is Tubby-like F-box protein 6.